Reading from the N-terminus, the 129-residue chain is Glycine cleavage system H protein (129 aa).

One can recognise a Lipoyl-binding domain in the interval 24 to 106 (SYTVGITEHA…YGEGWFFRVM (83 aa)). Lys65 bears the N6-lipoyllysine mark.

Belongs to the GcvH family. As to quaternary structure, the glycine cleavage system is composed of four proteins: P, T, L and H. The cofactor is (R)-lipoate.

In terms of biological role, the glycine cleavage system catalyzes the degradation of glycine. The H protein shuttles the methylamine group of glycine from the P protein to the T protein. The sequence is that of Glycine cleavage system H protein from Shewanella baltica (strain OS185).